A 278-amino-acid polypeptide reads, in one-letter code: 4-deoxy-L-threo-5-hexosulose-uronate ketol-isomerase (278 aa).

Zn(2+)-binding residues include His-196, His-198, Glu-203, and His-245.

It belongs to the KduI family. Homohexamer. Zn(2+) serves as cofactor.

It carries out the reaction 5-dehydro-4-deoxy-D-glucuronate = 3-deoxy-D-glycero-2,5-hexodiulosonate. The protein operates within glycan metabolism; pectin degradation; 2-dehydro-3-deoxy-D-gluconate from pectin: step 4/5. Functionally, catalyzes the isomerization of 5-dehydro-4-deoxy-D-glucuronate to 3-deoxy-D-glycero-2,5-hexodiulosonate. The sequence is that of 4-deoxy-L-threo-5-hexosulose-uronate ketol-isomerase from Escherichia coli (strain SMS-3-5 / SECEC).